A 49-amino-acid polypeptide reads, in one-letter code: DNA-directed RNA polymerase subunit Rpo12 (49 aa).

Residues Cys11, Cys27, and Cys30 each coordinate Zn(2+).

Belongs to the archaeal Rpo12/eukaryotic RPC10 RNA polymerase subunit family. In terms of assembly, part of the RNA polymerase complex. Zn(2+) serves as cofactor.

It is found in the cytoplasm. The protein resides in the chromosome. It carries out the reaction RNA(n) + a ribonucleoside 5'-triphosphate = RNA(n+1) + diphosphate. Its function is as follows. DNA-dependent RNA polymerase (RNAP) catalyzes the transcription of DNA into RNA using the four ribonucleoside triphosphates as substrates. The polypeptide is DNA-directed RNA polymerase subunit Rpo12 (Thermococcus kodakarensis (strain ATCC BAA-918 / JCM 12380 / KOD1) (Pyrococcus kodakaraensis (strain KOD1))).